Here is a 1255-residue protein sequence, read N- to C-terminus: RNA-directed RNA polymerase (1255 aa).

In terms of domain architecture, RdRp catalytic spans Leu-548–Val-756.

It is found in the virion. The enzyme catalyses RNA(n) + a ribonucleoside 5'-triphosphate = RNA(n+1) + diphosphate. Functionally, RNA-directed RNA polymerase that is involved in transcription and genome replication. Following infection, it catalyzes the synthesis of fully conservative plus strands. After core assembly, which consists in recruitment of one capped plus-strand for each genomic segments and polymerase complexes, the polymerase switches mode and catalyzes the synthesis of complementary minus-strands. The protein is RNA-directed RNA polymerase of Oryza latifolia (Indian wild rice).